The chain runs to 200 residues: Ribosomal RNA large subunit methyltransferase E (200 aa).

The S-adenosyl-L-methionine site is built by G51, W53, D71, D90, and D112. Residue K151 is the Proton acceptor of the active site.

This sequence belongs to the class I-like SAM-binding methyltransferase superfamily. RNA methyltransferase RlmE family.

It localises to the cytoplasm. The enzyme catalyses uridine(2552) in 23S rRNA + S-adenosyl-L-methionine = 2'-O-methyluridine(2552) in 23S rRNA + S-adenosyl-L-homocysteine + H(+). Its function is as follows. Specifically methylates the uridine in position 2552 of 23S rRNA at the 2'-O position of the ribose in the fully assembled 50S ribosomal subunit. This is Ribosomal RNA large subunit methyltransferase E from Treponema pallidum (strain Nichols).